A 145-amino-acid polypeptide reads, in one-letter code: D-aminoacyl-tRNA deacylase (145 aa).

The Gly-cisPro motif, important for rejection of L-amino acids motif lies at glycine 137 to proline 138.

The protein belongs to the DTD family. As to quaternary structure, homodimer.

Its subcellular location is the cytoplasm. It catalyses the reaction glycyl-tRNA(Ala) + H2O = tRNA(Ala) + glycine + H(+). The catalysed reaction is a D-aminoacyl-tRNA + H2O = a tRNA + a D-alpha-amino acid + H(+). Functionally, an aminoacyl-tRNA editing enzyme that deacylates mischarged D-aminoacyl-tRNAs. Also deacylates mischarged glycyl-tRNA(Ala), protecting cells against glycine mischarging by AlaRS. Acts via tRNA-based rather than protein-based catalysis; rejects L-amino acids rather than detecting D-amino acids in the active site. By recycling D-aminoacyl-tRNA to D-amino acids and free tRNA molecules, this enzyme counteracts the toxicity associated with the formation of D-aminoacyl-tRNA entities in vivo and helps enforce protein L-homochirality. In Yersinia enterocolitica serotype O:8 / biotype 1B (strain NCTC 13174 / 8081), this protein is D-aminoacyl-tRNA deacylase.